The chain runs to 674 residues: UvrABC system protein C (674 aa).

The GIY-YIG domain occupies 64-142 (NGPGVYRMLN…IKRLRPRFNV (79 aa)). The UVR domain occupies 252-287 (QAVKATIASAMAEASENLDFERAALYRDRLAALSHV).

This sequence belongs to the UvrC family. Interacts with UvrB in an incision complex.

It localises to the cytoplasm. Functionally, the UvrABC repair system catalyzes the recognition and processing of DNA lesions. UvrC both incises the 5' and 3' sides of the lesion. The N-terminal half is responsible for the 3' incision and the C-terminal half is responsible for the 5' incision. The sequence is that of UvrABC system protein C from Rhizobium meliloti (strain 1021) (Ensifer meliloti).